Reading from the N-terminus, the 298-residue chain is Thymidylate synthase (298 aa).

DUMP is bound by residues arginine 25 and 159–160 (RR). The Nucleophile role is filled by cysteine 179. Residues 200–203 (RSVD), asparagine 211, and 241–243 (HLY) contribute to the dUMP site. Aspartate 203 is a (6R)-5,10-methylene-5,6,7,8-tetrahydrofolate binding site. (6R)-5,10-methylene-5,6,7,8-tetrahydrofolate is bound at residue alanine 297.

The protein belongs to the thymidylate synthase family. Bacterial-type ThyA subfamily. As to quaternary structure, homodimer.

Its subcellular location is the cytoplasm. The enzyme catalyses dUMP + (6R)-5,10-methylene-5,6,7,8-tetrahydrofolate = 7,8-dihydrofolate + dTMP. Its pathway is pyrimidine metabolism; dTTP biosynthesis. Its function is as follows. Catalyzes the reductive methylation of 2'-deoxyuridine-5'-monophosphate (dUMP) to 2'-deoxythymidine-5'-monophosphate (dTMP) while utilizing 5,10-methylenetetrahydrofolate (mTHF) as the methyl donor and reductant in the reaction, yielding dihydrofolate (DHF) as a by-product. This enzymatic reaction provides an intracellular de novo source of dTMP, an essential precursor for DNA biosynthesis. In Cereibacter sphaeroides (strain ATCC 17029 / ATH 2.4.9) (Rhodobacter sphaeroides), this protein is Thymidylate synthase.